A 262-amino-acid polypeptide reads, in one-letter code: Expansin-A21 (262 aa).

The signal sequence occupies residues 1–29; sequence MKLLEKMTYVECFMIIMATWFMFISYSHG. Residues 64–169 enclose the Expansin-like EG45 domain; the sequence is EGACGYGDLN…RRVPCAKTGG (106 aa). One can recognise an Expansin-like CBD domain in the interval 179 to 258; it reads NILTILPYNV…SWGFGQTFDG (80 aa).

It belongs to the expansin family. Expansin A subfamily.

Its subcellular location is the secreted. The protein localises to the cell wall. It is found in the membrane. Its function is as follows. Causes loosening and extension of plant cell walls by disrupting non-covalent bonding between cellulose microfibrils and matrix glucans. No enzymatic activity has been found. This chain is Expansin-A21 (EXPA21), found in Arabidopsis thaliana (Mouse-ear cress).